Reading from the N-terminus, the 270-residue chain is Exosome complex component rrp43 (270 aa).

The protein belongs to the RNase PH family. In terms of assembly, component of the RNA exosome complex. Specifically part of the catalytically inactive RNA exosome core complex (Exo-9) which may associate with the catalytic subunits rrp66 and dis3 in cytoplasmic- and nuclear-specific RNA exosome complex forms. Exo-9 is formed by a hexameric base ring of RNase PH domain-containing subunits and a cap ring consisting of csl4, rrp4 and rrp40.

It localises to the cytoplasm. The protein localises to the nucleus. It is found in the nucleolus. In terms of biological role, non-catalytic component of the RNA exosome complex which has 3'-&gt;5' exoribonuclease activity and participates in a multitude of cellular RNA processing and degradation events. In the nucleus, the RNA exosome complex is involved in proper maturation of stable RNA species such as rRNA, snRNA and snoRNA, in the elimination of RNA processing by-products and non-coding 'pervasive' transcripts, such as antisense RNA species and cryptic unstable transcripts (CUTs), and of mRNAs with processing defects, thereby limiting or excluding their export to the cytoplasm. In the cytoplasm, the RNA exosome complex is involved in general mRNA turnover and in RNA surveillance pathways, preventing translation of aberrant mRNAs. The catalytic inactive RNA exosome core complex of 9 subunits (Exo-9) is proposed to play a pivotal role in the binding and presentation of RNA for ribonucleolysis, and to serve as a scaffold for the association with catalytic subunits and accessory proteins or complexes. ski6 is part of the hexameric ring of RNase PH domain-containing subunits proposed to form a central channel which threads RNA substrates for degradation. This is Exosome complex component rrp43 (rrp43) from Schizosaccharomyces pombe (strain 972 / ATCC 24843) (Fission yeast).